The primary structure comprises 360 residues: Peptide chain release factor 1 (360 aa).

An N5-methylglutamine modification is found at Gln-234.

This sequence belongs to the prokaryotic/mitochondrial release factor family. In terms of processing, methylated by PrmC. Methylation increases the termination efficiency of RF1.

It is found in the cytoplasm. Functionally, peptide chain release factor 1 directs the termination of translation in response to the peptide chain termination codons UAG and UAA. The polypeptide is Peptide chain release factor 1 (Clostridium perfringens (strain 13 / Type A)).